Here is a 339-residue protein sequence, read N- to C-terminus: Ketol-acid reductoisomerase (NADP(+)) (339 aa).

The KARI N-terminal Rossmann domain occupies 1–182 (MRVYYDRDAD…GGGRSGIIET (182 aa)). Residues 24–27 (YGSQ), arginine 48, serine 51, threonine 53, and 83–86 (DELQ) each bind NADP(+). Residue histidine 108 is part of the active site. Residue glycine 134 coordinates NADP(+). One can recognise a KARI C-terminal knotted domain in the interval 183 to 328 (SFREECETDL…EKLRAMMPWI (146 aa)). The Mg(2+) site is built by aspartate 191, glutamate 195, glutamate 227, and glutamate 231. Serine 252 contacts substrate.

Belongs to the ketol-acid reductoisomerase family. The cofactor is Mg(2+).

It carries out the reaction (2R)-2,3-dihydroxy-3-methylbutanoate + NADP(+) = (2S)-2-acetolactate + NADPH + H(+). The catalysed reaction is (2R,3R)-2,3-dihydroxy-3-methylpentanoate + NADP(+) = (S)-2-ethyl-2-hydroxy-3-oxobutanoate + NADPH + H(+). Its pathway is amino-acid biosynthesis; L-isoleucine biosynthesis; L-isoleucine from 2-oxobutanoate: step 2/4. It functions in the pathway amino-acid biosynthesis; L-valine biosynthesis; L-valine from pyruvate: step 2/4. Its function is as follows. Involved in the biosynthesis of branched-chain amino acids (BCAA). Catalyzes an alkyl-migration followed by a ketol-acid reduction of (S)-2-acetolactate (S2AL) to yield (R)-2,3-dihydroxy-isovalerate. In the isomerase reaction, S2AL is rearranged via a Mg-dependent methyl migration to produce 3-hydroxy-3-methyl-2-ketobutyrate (HMKB). In the reductase reaction, this 2-ketoacid undergoes a metal-dependent reduction by NADPH to yield (R)-2,3-dihydroxy-isovalerate. The sequence is that of Ketol-acid reductoisomerase (NADP(+)) from Paramagnetospirillum magneticum (strain ATCC 700264 / AMB-1) (Magnetospirillum magneticum).